Reading from the N-terminus, the 320-residue chain is MRKKKDGQNLPDFRKNPPKLDKKAYEKELKRLQAELVDLQQWVVETGARVVIVMEGRDAAGKGSAIKRITQYLNPRSARIEALPTPNSREKGQWYFQRYIEKLPTAGEIVIFDRSWYNRAGVERVMGFCTSQEYRRFLHQAPIFERLLVEDGIHLRKYWFSVSDEEQIERFEDRLSDPLRRWKLSPMDLQSITRWEDYSRAKDEMFIHTDIPSAPWYTVESEDKKRSRINVISHLLSTIPYEKIDRPLPEIPHRPDSESDYVRPPRDEFRYVPDVAAHLEEERIKKEEKAKKAKKPAKAAGKNSDKQKSSGGKGKKKSKK.

3 disordered regions span residues 1-21 (MRKK…PKLD), 246-267 (RPLP…PPRD), and 281-320 (EERI…KSKK). Basic and acidic residues predominate over residues 12–21 (DFRKNPPKLD). A compositionally biased stretch (basic and acidic residues) spans 281 to 290 (EERIKKEEKA).

It belongs to the polyphosphate kinase 2 (PPK2) family. Class I subfamily.

The catalysed reaction is [phosphate](n) + GTP = [phosphate](n+1) + GDP. The chain is Putative GDP-polyphosphate phosphotransferase PKK2A from Corynebacterium glutamicum (strain ATCC 13032 / DSM 20300 / JCM 1318 / BCRC 11384 / CCUG 27702 / LMG 3730 / NBRC 12168 / NCIMB 10025 / NRRL B-2784 / 534).